A 381-amino-acid chain; its full sequence is E3 ubiquitin-protein ligase KCMF1 (381 aa).

Serine 2 is modified (N-acetylserine). Residue serine 2 is modified to Phosphoserine. Residues 4-60 form a ZZ-type zinc finger; sequence HEGVSCDACLKGNFRGRRYKCLICYDYDLCASCYESGATTTRHTTDHPMQCILTRVD. Cysteine 9, cysteine 12, cysteine 24, cysteine 27, cysteine 33, cysteine 36, histidine 46, and histidine 50 together coordinate Zn(2+). A C2H2-type zinc finger spans residues 78-101; sequence FTCPYCGKMGYTETSLQEHVTSEH. A disordered region spans residues 154 to 194; sequence MFHPGRGLGGPRARRSNMHFTSSSTGGLSSSQSSYSPSSRE. Serine 169, serine 189, and serine 212 each carry phosphoserine. A compositionally biased stretch (low complexity) spans 175 to 192; that stretch reads SSSTGGLSSSQSSYSPSS. Residues 224–259 are a coiled coil; that stretch reads ASQLQQLQMQLQLERQHAQAARQQLETARNASRRTN. Residues serine 335 and serine 336 each carry the phosphoserine modification.

It belongs to the KCMF1 family. As to quaternary structure, component of the SIFI complex, composed of KCMF1, UBR4 and calmodulin (CALM1, CALM2 or CALM3). In terms of tissue distribution, testis, liver, kidney, heart and skeletal muscle.

It is found in the cytoplasm. Its subcellular location is the late endosome. The protein resides in the lysosome. The catalysed reaction is S-ubiquitinyl-[E2 ubiquitin-conjugating enzyme]-L-cysteine + [acceptor protein]-L-lysine = [E2 ubiquitin-conjugating enzyme]-L-cysteine + N(6)-ubiquitinyl-[acceptor protein]-L-lysine.. It participates in protein modification; protein ubiquitination. E3 ubiquitin-protein ligase which accepts ubiquitin from an E2 ubiquitin-conjugating enzyme and then transfers it to targeted substrates, promoting their degradation by the proteasome. Together with UBR4, component of the N-end rule pathway: ubiquitinates proteins bearing specific N-terminal residues that are destabilizing according to the N-end rule, leading to their degradation. Does not ubiquitinate proteins that are acetylated at the N-terminus. Together with UBR4, part of a protein quality control pathway that catalyzes ubiquitination and degradation of proteins that have been oxidized in response to reactive oxygen species (ROS): recognizes proteins with an Arg-CysO3(H) degron at the N-terminus, and mediates assembly of heterotypic 'Lys-63'-/'Lys-27'-linked branched ubiquitin chains on oxidized proteins, leading to their degradation by autophagy. Catalytic component of the SIFI complex, a multiprotein complex required to inhibit the mitochondrial stress response after a specific stress event has been resolved: ubiquitinates and degrades (1) components of the HRI-mediated signaling of the integrated stress response, such as DELE1 and EIF2AK1/HRI, as well as (2) unimported mitochondrial precursors. Within the SIFI complex, UBR4 initiates ubiquitin chain that are further elongated or branched by KCMF1. This chain is E3 ubiquitin-protein ligase KCMF1, found in Mus musculus (Mouse).